The sequence spans 95 residues: Large ribosomal subunit protein uL23 (95 aa).

It belongs to the universal ribosomal protein uL23 family. As to quaternary structure, part of the 50S ribosomal subunit. Contacts protein L29.

Functionally, binds to 23S rRNA. One of the proteins that surrounds the polypeptide exit tunnel on the outside of the ribosome. This chain is Large ribosomal subunit protein uL23, found in Methanopyrus kandleri (strain AV19 / DSM 6324 / JCM 9639 / NBRC 100938).